Consider the following 100-residue polypeptide: Co-chaperonin GroES (100 aa).

This sequence belongs to the GroES chaperonin family. In terms of assembly, heptamer of 7 subunits arranged in a ring. Interacts with the chaperonin GroEL.

The protein resides in the cytoplasm. In terms of biological role, together with the chaperonin GroEL, plays an essential role in assisting protein folding. The GroEL-GroES system forms a nano-cage that allows encapsulation of the non-native substrate proteins and provides a physical environment optimized to promote and accelerate protein folding. GroES binds to the apical surface of the GroEL ring, thereby capping the opening of the GroEL channel. The polypeptide is Co-chaperonin GroES (Mycolicibacterium vanbaalenii (strain DSM 7251 / JCM 13017 / BCRC 16820 / KCTC 9966 / NRRL B-24157 / PYR-1) (Mycobacterium vanbaalenii)).